An 84-amino-acid polypeptide reads, in one-letter code: Glutaredoxin (84 aa).

The region spanning 1-84 is the Glutaredoxin domain; that stretch reads MPPVVIYTTA…AGKLDALLSA (84 aa). A disulfide bridge connects residues C12 and C15.

It belongs to the glutaredoxin family. Monomer.

The protein localises to the cytoplasm. Its function is as follows. Has a glutathione-disulfide oxidoreductase activity in the presence of NADPH and glutathione reductase. Reduces low molecular weight disulfides and proteins. This chain is Glutaredoxin (grx), found in Pseudomonas aeruginosa (strain ATCC 15692 / DSM 22644 / CIP 104116 / JCM 14847 / LMG 12228 / 1C / PRS 101 / PAO1).